Consider the following 426-residue polypeptide: Egl nine homolog 1 (426 aa).

Alanine 2 carries the post-translational modification N-acetylalanine. The segment at 6–20 (GGPGGPSPSERDRQY) is required for nuclear export. Position 12 is a phosphoserine (serine 12). Zn(2+) is bound by residues cysteine 21, cysteine 24, cysteine 33, cysteine 36, cysteine 42, histidine 46, histidine 54, and cysteine 58. An MYND-type; atypical zinc finger spans residues 21-58 (CELCGKMENLLRCSRCRSSFYCCKEHQRQDWKKHKLVC). Disordered stretches follow at residues 65–129 (LGHG…PCRA) and 160–184 (ANLY…PNGQ). Pro residues predominate over residues 77–87 (PAPPAAVPPPR). Residues 89–103 (GAREPRKAAARRDNA) are compositionally biased toward basic and acidic residues. Residues 120-129 (PAAAASPCRA) are compositionally biased toward low complexity. Position 125 is a phosphoserine (serine 125). Residues cysteine 201 and cysteine 208 each carry the S-nitrosocysteine modification. The segment at 241-251 (VSQKSDSSKDI) is beta(2)beta(3) 'finger-like' loop. The Fe2OG dioxygenase domain maps to 291-392 (KINGRTKAMV…RYAITVWYFD (102 aa)). Cysteine 302 carries the S-nitrosocysteine modification. Positions 313 and 315 each coordinate Fe cation. S-nitrosocysteine is present on residues cysteine 323 and cysteine 326. Histidine 374 serves as a coordination point for Fe cation. Position 383 (arginine 383) interacts with 2-oxoglutarate.

Monomer. Interacts with ING4; the interaction inhibits the hydroxylation of HIF alpha proteins. Interacts with PTGES3 (via PXLE motif); thereby recruiting EGLN1 to the HSP90 pathway to facilitate HIF alpha proteins hydroxylation. Interacts with LIMD1. Found in a complex composed of LIMD1, VHL, EGLN1/PHD2, ELOB and CUL2. Interacts with EPAS1. Interacts with CBFA2T3. Interacts with HIF1A. Requires Fe(2+) as cofactor. It depends on L-ascorbate as a cofactor. In terms of processing, S-nitrosylation inhibits the enzyme activity up to 60% under aerobic conditions. Chelation of Fe(2+) has no effect on the S-nitrosylation. It is uncertain whether nitrosylation occurs on Cys-323 or Cys-326. According to PubMed:11056053, widely expressed with highest levels in skeletal muscle and heart, moderate levels in pancreas, brain (dopaminergic neurons of adult and fetal substantia nigra) and kidney, and lower levels in lung and liver. According to PubMed:12351678 widely expressed with highest levels in brain, kidney and adrenal gland. Expressed in cardiac myocytes, aortic endothelial cells and coronary artery smooth muscle. According to PubMed:12788921; expressed in adult and fetal heart, brain, liver, lung, skeletal muscle and kidney. Also expressed in placenta. Highest levels in adult heart, brain, lung and liver and fetal brain, heart spleen and skeletal muscle.

Its subcellular location is the cytoplasm. It localises to the nucleus. The catalysed reaction is L-prolyl-[hypoxia-inducible factor alpha subunit] + 2-oxoglutarate + O2 = trans-4-hydroxy-L-prolyl-[hypoxia-inducible factor alpha subunit] + succinate + CO2. With respect to regulation, following exposure to hypoxia, activated in HeLa cells but not in cardiovascular cells. Cellular oxygen sensor that catalyzes, under normoxic conditions, the post-translational formation of 4-hydroxyproline in hypoxia-inducible factor (HIF) alpha proteins. Hydroxylates a specific proline found in each of the oxygen-dependent degradation (ODD) domains (N-terminal, NODD, and C-terminal, CODD) of HIF1A. Also hydroxylates HIF2A. Has a preference for the CODD site for both HIF1A and HIF1B. Hydroxylated HIFs are then targeted for proteasomal degradation via the von Hippel-Lindau ubiquitination complex. Under hypoxic conditions, the hydroxylation reaction is attenuated allowing HIFs to escape degradation resulting in their translocation to the nucleus, heterodimerization with HIF1B, and increased expression of hypoxy-inducible genes. EGLN1 is the most important isozyme under normoxia and, through regulating the stability of HIF1, involved in various hypoxia-influenced processes such as angiogenesis in retinal and cardiac functionality. Target proteins are preferentially recognized via a LXXLAP motif. In Homo sapiens (Human), this protein is Egl nine homolog 1.